The primary structure comprises 71 residues: Large ribosomal subunit protein uL29 (71 aa).

Belongs to the universal ribosomal protein uL29 family.

This is Large ribosomal subunit protein uL29 (rpl29) from Halobacterium salinarum (strain ATCC 700922 / JCM 11081 / NRC-1) (Halobacterium halobium).